A 365-amino-acid polypeptide reads, in one-letter code: MFRLLRWRLGRTLLRAAGRRCGGCTARLLPERTGDAGTGAERLRTRGAPARGHGVLPLLAALAWFSRPAATAEQPGEDASDEAEAEIIQLLKQAKLSIMKDEPEAAELILHDALRLAYESDNRKAITYTYDLMANLAFIRGQLENAEQLFKATMSYLLGGGMKQEDNAIIEISLKLANIYAAQNKQEFALAGYEFCISTLEGKIEREKELAEDIMSEETANTYLLLGMCLDSCARYLLFSKQLSQAQRMYEKALQICQEIQGERHPQTIVLMSDLATTLDAQGHFDDAYIYMQRASDLAREINHPELHMVLSNLAAILIHRERYTQAKEIYQEALKRAELKRDEVSVQHIREELAELSRKSRRLT.

A mitochondrion-targeting transit peptide spans 1-52 (MFRLLRWRLGRTLLRAAGRRCGGCTARLLPERTGDAGTGAERLRTRGAPARG). TPR repeat units lie at residues 127-160 (TYTY…LLGG), 220-260 (ANTY…CQEI), 269-302 (IVLM…AREI), and 308-341 (HMVL…AELK).

This sequence belongs to the TTC19 family. As to quaternary structure, binds to the mature mitochondrial complex III dimer, after the incorporation of the Rieske protein UQCRFS1. Interacts with UQCRC1 and UQCRFS1. Interacts with ZFYVE26 and CHMP4B. Post-translationally, proteolytically cleaved by PARL.

The protein resides in the mitochondrion inner membrane. Required for the preservation of the structural and functional integrity of mitochondrial respiratory complex III by allowing the physiological turnover of the Rieske protein UQCRFS1. Involved in the clearance of UQCRFS1 N-terminal fragments, which are produced upon incorporation into the complex III and whose presence is detrimental for its catalytic activity. The sequence is that of Tetratricopeptide repeat protein 19, mitochondrial (Ttc19) from Mus musculus (Mouse).